Consider the following 504-residue polypeptide: ATP synthase subunit alpha 2 (504 aa).

An ATP-binding site is contributed by 169–176 (GDRQTGKT).

It belongs to the ATPase alpha/beta chains family. As to quaternary structure, F-type ATPases have 2 components, CF(1) - the catalytic core - and CF(0) - the membrane proton channel. CF(1) has five subunits: alpha(3), beta(3), gamma(1), delta(1), epsilon(1). CF(0) has three main subunits: a(1), b(2) and c(9-12). The alpha and beta chains form an alternating ring which encloses part of the gamma chain. CF(1) is attached to CF(0) by a central stalk formed by the gamma and epsilon chains, while a peripheral stalk is formed by the delta and b chains.

The protein resides in the cell membrane. The enzyme catalyses ATP + H2O + 4 H(+)(in) = ADP + phosphate + 5 H(+)(out). Functionally, produces ATP from ADP in the presence of a proton gradient across the membrane. The alpha chain is a regulatory subunit. The chain is ATP synthase subunit alpha 2 from Listeria innocua serovar 6a (strain ATCC BAA-680 / CLIP 11262).